A 316-amino-acid chain; its full sequence is Rhomboid-related protein 4 (316 aa).

The Cytoplasmic portion of the chain corresponds to 1-21; sequence MQRRTRGIDTGLLLLLSQVFH. A helical membrane pass occupies residues 22–42; sequence IGINNIPPVTLATLAVNVWFF. Over 43–103 the chain is Extracellular; that stretch reads LNPWKPLYHS…KLEKRLGSRW (61 aa). A helical membrane pass occupies residues 104–124; the sequence is FAYIIATFSLLTGVVYLLLQF. Residues 125–137 lie on the Cytoplasmic side of the membrane; that stretch reads ASAELMNQPDFKR. A helical membrane pass occupies residues 138–154; it reads NCAVGFSGVLFALKVLS. Ser144 acts as the Nucleophile in catalysis. Over 155-182 the chain is Extracellular; sequence NHYCPGGFVNILGFPVPNRFACWAELAA. A helical transmembrane segment spans residues 183–203; that stretch reads IHFCTPGTSFAGHLAGILVGL. His195 is a catalytic residue. The Cytoplasmic portion of the chain corresponds to 204-316; sequence MYTQGPLKKI…RQRLHRFDGQ (113 aa). Residues 269-284 are ubiquitin-binding domain (UBD); sequence SEEEQLERALRASIWD. The tract at residues 301 to 316 is VCP/p97-interacting motif (VIM); it reads PEEEMRRQRLHRFDGQ.

It belongs to the peptidase S54 family. As to quaternary structure, interacts with BIK and STEAP3. Interacts (via C-terminal domain) with VCP. Interacts with ubiquitin and ubiquitinated proteins. As to expression, expressed in intestine, lung, brain, kidney, epididymis and testis.

The protein localises to the endoplasmic reticulum membrane. It localises to the mitochondrion membrane. The catalysed reaction is Cleaves type-1 transmembrane domains using a catalytic dyad composed of serine and histidine that are contributed by different transmembrane domains.. Its activity is regulated as follows. Inhibited by aprotinin. Its function is as follows. Intramembrane-cleaving serine protease that cleaves single transmembrane or multi-pass membrane proteins in the hydrophobic plane of the membrane, luminal loops and juxtamembrane regions. Involved in regulated intramembrane proteolysis and the subsequent release of functional polypeptides from their membrane anchors. Functional component of endoplasmic reticulum-associated degradation (ERAD) for misfolded membrane proteins. Required for the degradation process of some specific misfolded endoplasmic reticulum (ER) luminal proteins. Participates in the transfer of misfolded proteins from the ER to the cytosol, where they are destroyed by the proteasome in a ubiquitin-dependent manner. Functions in BIK, MPZ, PKD1, PTCRA, RHO, STEAP3 and TRAC processing. Involved in the regulation of exosomal secretion; inhibits the TSAP6-mediated secretion pathway. Involved in the regulation of apoptosis; modulates BIK-mediated apoptotic activity. Also plays a role in the regulation of spermatogenesis; inhibits apoptotic activity in spermatogonia. In Rattus norvegicus (Rat), this protein is Rhomboid-related protein 4 (Rhbdd1).